The primary structure comprises 308 residues: UDP-N-acetylenolpyruvoylglucosamine reductase (308 aa).

In terms of domain architecture, FAD-binding PCMH-type spans Arg-37–Gly-201. The active site involves Arg-181. Positions Ser-216–Lys-233 are enriched in polar residues. The segment at Ser-216 to Pro-236 is disordered. Ser-230 (proton donor) is an active-site residue. Glu-300 is an active-site residue.

This sequence belongs to the MurB family. FAD is required as a cofactor.

It localises to the cytoplasm. It carries out the reaction UDP-N-acetyl-alpha-D-muramate + NADP(+) = UDP-N-acetyl-3-O-(1-carboxyvinyl)-alpha-D-glucosamine + NADPH + H(+). The protein operates within cell wall biogenesis; peptidoglycan biosynthesis. Its function is as follows. Cell wall formation. This is UDP-N-acetylenolpyruvoylglucosamine reductase from Azorhizobium caulinodans (strain ATCC 43989 / DSM 5975 / JCM 20966 / LMG 6465 / NBRC 14845 / NCIMB 13405 / ORS 571).